A 692-amino-acid chain; its full sequence is Elongation factor G (692 aa).

Residues K8–V283 enclose the tr-type G domain. GTP contacts are provided by residues A17–T24, D81–H85, and N135–D138.

It belongs to the TRAFAC class translation factor GTPase superfamily. Classic translation factor GTPase family. EF-G/EF-2 subfamily.

It localises to the cytoplasm. Catalyzes the GTP-dependent ribosomal translocation step during translation elongation. During this step, the ribosome changes from the pre-translocational (PRE) to the post-translocational (POST) state as the newly formed A-site-bound peptidyl-tRNA and P-site-bound deacylated tRNA move to the P and E sites, respectively. Catalyzes the coordinated movement of the two tRNA molecules, the mRNA and conformational changes in the ribosome. The chain is Elongation factor G from Exiguobacterium sp. (strain ATCC BAA-1283 / AT1b).